The chain runs to 37 residues: Large ribosomal subunit protein bL36A (37 aa).

This sequence belongs to the bacterial ribosomal protein bL36 family.

The protein is Large ribosomal subunit protein bL36A of Clavibacter sepedonicus (Clavibacter michiganensis subsp. sepedonicus).